The chain runs to 338 residues: uncharacterized protein (338 aa).

This is an uncharacterized protein from Bacillus subtilis (strain 168).